The chain runs to 219 residues: Holliday junction branch migration complex subunit RuvA (219 aa).

A domain I region spans residues 1 to 66 (MIEYIIGKIS…NFLFEYYGFK (66 aa)). The tract at residues 67-148 (TLREKIFFEN…SEYNNDVNHS (82 aa)) is domain II. The tract at residues 149-154 (SINQQS) is flexible linker. Residues 155–219 (NSYNPVPDLV…EAVTNKTTVS (65 aa)) are domain III.

The protein belongs to the RuvA family. In terms of assembly, homotetramer. Forms an RuvA(8)-RuvB(12)-Holliday junction (HJ) complex. HJ DNA is sandwiched between 2 RuvA tetramers; dsDNA enters through RuvA and exits via RuvB. An RuvB hexamer assembles on each DNA strand where it exits the tetramer. Each RuvB hexamer is contacted by two RuvA subunits (via domain III) on 2 adjacent RuvB subunits; this complex drives branch migration. In the full resolvosome a probable DNA-RuvA(4)-RuvB(12)-RuvC(2) complex forms which resolves the HJ.

It is found in the cytoplasm. Functionally, the RuvA-RuvB-RuvC complex processes Holliday junction (HJ) DNA during genetic recombination and DNA repair, while the RuvA-RuvB complex plays an important role in the rescue of blocked DNA replication forks via replication fork reversal (RFR). RuvA specifically binds to HJ cruciform DNA, conferring on it an open structure. The RuvB hexamer acts as an ATP-dependent pump, pulling dsDNA into and through the RuvAB complex. HJ branch migration allows RuvC to scan DNA until it finds its consensus sequence, where it cleaves and resolves the cruciform DNA. This chain is Holliday junction branch migration complex subunit RuvA, found in Malacoplasma penetrans (strain HF-2) (Mycoplasma penetrans).